The following is a 462-amino-acid chain: Acetate--CoA ligase [ADP-forming] I subunit alpha (462 aa).

Belongs to the acetate CoA ligase alpha subunit family. As to quaternary structure, heterotetramer of two alpha and two beta subunits.

It localises to the cytoplasm. The enzyme catalyses acetate + ATP + CoA = acetyl-CoA + ADP + phosphate. Activity is dependent on magnesium. Functionally, catalyzes the reversible formation of acetate and ATP from acetyl-CoA by using ADP and phosphate. Can use other substrates such as isobutyryl-CoA, propionyl-CoA and butyryl-CoA, but not indoleacetyl-CoA, phenylacetyl-CoA or succinyl-CoA. Seems to be involved primarily in the conversion of acetyl-CoA to acetate. Participates in the degradation of branched-chain amino acids via branched-chain-acyl-CoA esters. This chain is Acetate--CoA ligase [ADP-forming] I subunit alpha, found in Pyrococcus furiosus (strain ATCC 43587 / DSM 3638 / JCM 8422 / Vc1).